The chain runs to 863 residues: Ubiquitin carboxyl-terminal hydrolase 13 (863 aa).

Ser-114 bears the Phosphoserine; by AURKB mark. Position 122 is a phosphothreonine (Thr-122). The UBP-type; degenerate zinc-finger motif lies at 187 to 295 (PVSKYANNLT…KHLAHFGIDM (109 aa)). Positions 211, 214, 231, and 244 each coordinate Zn(2+). Residue Lys-311 forms a Glycyl lysine isopeptide (Lys-Gly) (interchain with G-Cter in SUMO2) linkage. The 526-residue stretch at 336–861 (TGLKNLGNSC…LGYMYFYRRI (526 aa)) folds into the USP domain. Cys-345 acts as the Nucleophile in catalysis. A Glycyl lysine isopeptide (Lys-Gly) (interchain with G-Cter in SUMO2) cross-link involves residue Lys-405. UBA domains lie at 652–693 (DIDE…IIVH) and 727–767 (QPPE…IFSH). His-823 functions as the Proton acceptor in the catalytic mechanism.

It belongs to the peptidase C19 family. In terms of assembly, interacts with UFD1. Interacts (via UBA domains) with SIAH2 (when ubiquitinated). Interacts with BAG6; the interaction is direct and may mediate UBL4A deubiquitination. Interacts (via UBA 2 domain) with AMFR; the interaction is direct. Interacts with UBL4A; may be indirect via BAG6. Interacts with NEDD4. Phosphorylated by AURKB at Ser-114; leading to stabilization of cell cycle proteins such as SKP2 and AURKB, but not MCL1. In terms of tissue distribution, highly expressed in ovary and testes.

The protein localises to the cytoplasm. It carries out the reaction Thiol-dependent hydrolysis of ester, thioester, amide, peptide and isopeptide bonds formed by the C-terminal Gly of ubiquitin (a 76-residue protein attached to proteins as an intracellular targeting signal).. Its activity is regulated as follows. Specifically inhibited by spautin-1 (specific and potent autophagy inhibitor-1), a derivative of MBCQ that binds to USP13 and inhibits deubiquitinase activity. Regulated by PIK3C3/VPS34-containing complexes. The weak deubiquitinase activity in vitro suggests the existence of some mechanism that activates the enzyme. In terms of biological role, deubiquitinase that mediates deubiquitination of target proteins such as BECN1, MITF, SKP2 and USP10 and is involved in various processes such as autophagy, endoplasmic reticulum-associated degradation (ERAD), cell cycle progression or DNA damage response. Component of a regulatory loop that controls autophagy and p53/TP53 levels: mediates deubiquitination of BECN1, a key regulator of autophagy, leading to stabilize the PIK3C3/VPS34-containing complexes. Alternatively, forms with NEDD4 a deubiquitination complex, which subsequently stabilizes VPS34 to promote autophagy. Also deubiquitinates USP10, an essential regulator of p53/TP53 stability. In turn, PIK3C3/VPS34-containing complexes regulate USP13 stability, suggesting the existence of a regulatory system by which PIK3C3/VPS34-containing complexes regulate p53/TP53 protein levels via USP10 and USP13. Recruited by nuclear UFD1 and mediates deubiquitination of SKP2, thereby regulating endoplasmic reticulum-associated degradation (ERAD). Also regulates ERAD through the deubiquitination of UBL4A a component of the BAG6/BAT3 complex. Mediates stabilization of SIAH2 independently of deubiquitinase activity: binds ubiquitinated SIAH2 and acts by impairing SIAH2 autoubiquitination. Regulates the cell cycle progression by stabilizing cell cycle proteins such as SKP2 and AURKB. In addition, plays an important role in maintaining genomic stability and in DNA replication checkpoint activation via regulation of RAP80 and TOPBP1. Deubiquitinates the multifunctional protein HMGB1 and subsequently drives its nucleocytoplasmic localization and its secretion. Positively regulates type I and type II interferon signalings by deubiquitinating STAT1 but negatively regulates antiviral response by deubiquitinating STING1. The sequence is that of Ubiquitin carboxyl-terminal hydrolase 13 (USP13) from Homo sapiens (Human).